Reading from the N-terminus, the 294-residue chain is UPF0761 membrane protein YPTB0027 (294 aa).

Helical transmembrane passes span 44–64, 67–87, 108–128, 136–156, 185–205, 212–232, and 246–266; these read LLSLVPLITVIFALFAAFPMF, ISIKLKAFIFANFMPATGDII, GLIVTALLLIYSVDSVLNIIW, LVFSFAVYWMVLTLGPILVGA, VFPLLISWVSFWLLYSVVPTV, ALIGALVAALLFELGKKGFAM, and VLAVIPILFLWVYWSWCIVLL.

The protein belongs to the UPF0761 family.

It is found in the cell inner membrane. This chain is UPF0761 membrane protein YPTB0027, found in Yersinia pseudotuberculosis serotype I (strain IP32953).